A 214-amino-acid chain; its full sequence is Large ribosomal subunit protein uL3 (214 aa).

N5-methylglutamine is present on Gln151.

This sequence belongs to the universal ribosomal protein uL3 family. Part of the 50S ribosomal subunit. Forms a cluster with proteins L14 and L19. Post-translationally, methylated by PrmB.

One of the primary rRNA binding proteins, it binds directly near the 3'-end of the 23S rRNA, where it nucleates assembly of the 50S subunit. In Saccharophagus degradans (strain 2-40 / ATCC 43961 / DSM 17024), this protein is Large ribosomal subunit protein uL3.